The sequence spans 132 residues: L-ectoine synthase (132 aa).

Belongs to the ectoine synthase family.

It catalyses the reaction (2S)-4-acetamido-2-aminobutanoate = L-ectoine + H2O. It functions in the pathway amine and polyamine biosynthesis; ectoine biosynthesis; L-ectoine from L-aspartate 4-semialdehyde: step 3/3. Catalyzes the circularization of gamma-N-acetyl-alpha,gamma-diaminobutyric acid (ADABA) to ectoine (1,4,5,6-tetrahydro-2-methyl-4-pyrimidine carboxylic acid), which is an excellent osmoprotectant. The chain is L-ectoine synthase from Rhodococcus opacus (strain B4).